Reading from the N-terminus, the 480-residue chain is UDP-N-acetylmuramate--L-alanine ligase (480 aa).

An ATP-binding site is contributed by 127–133; sequence GTHGKTT.

Belongs to the MurCDEF family.

It is found in the cytoplasm. It carries out the reaction UDP-N-acetyl-alpha-D-muramate + L-alanine + ATP = UDP-N-acetyl-alpha-D-muramoyl-L-alanine + ADP + phosphate + H(+). It functions in the pathway cell wall biogenesis; peptidoglycan biosynthesis. Functionally, cell wall formation. This is UDP-N-acetylmuramate--L-alanine ligase from Blochmanniella floridana.